The chain runs to 207 residues: Uracil phosphoribosyltransferase (207 aa).

5-phospho-alpha-D-ribose 1-diphosphate is bound by residues Arg77, Arg102, and 129–137; that span reads DPMLATGGS. Uracil contacts are provided by residues Ile192 and 197–199; that span reads GDA. Residue Asp198 coordinates 5-phospho-alpha-D-ribose 1-diphosphate.

This sequence belongs to the UPRTase family. Mg(2+) serves as cofactor.

It carries out the reaction UMP + diphosphate = 5-phospho-alpha-D-ribose 1-diphosphate + uracil. Its pathway is pyrimidine metabolism; UMP biosynthesis via salvage pathway; UMP from uracil: step 1/1. Allosterically activated by GTP. In terms of biological role, catalyzes the conversion of uracil and 5-phospho-alpha-D-ribose 1-diphosphate (PRPP) to UMP and diphosphate. This is Uracil phosphoribosyltransferase from Mesoplasma florum (strain ATCC 33453 / NBRC 100688 / NCTC 11704 / L1) (Acholeplasma florum).